Reading from the N-terminus, the 346-residue chain is GTPase Obg (346 aa).

An Obg domain is found at 1–159; sequence MKFLDSAKIY…RTVLLRLKLI (159 aa). Residues 160–327 enclose the OBG-type G domain; that stretch reads ADAGLVGLPN…ALRAVLAEID (168 aa). Residues 166–173, 191–195, 212–215, 279–282, and 308–310 each bind GTP; these read GLPNAGKS, FTTLN, DIPG, SKVD, and SAA. Ser173 and Thr193 together coordinate Mg(2+).

This sequence belongs to the TRAFAC class OBG-HflX-like GTPase superfamily. OBG GTPase family. In terms of assembly, monomer. Requires Mg(2+) as cofactor.

It is found in the cytoplasm. In terms of biological role, an essential GTPase which binds GTP, GDP and possibly (p)ppGpp with moderate affinity, with high nucleotide exchange rates and a fairly low GTP hydrolysis rate. Plays a role in control of the cell cycle, stress response, ribosome biogenesis and in those bacteria that undergo differentiation, in morphogenesis control. The polypeptide is GTPase Obg (Methylocella silvestris (strain DSM 15510 / CIP 108128 / LMG 27833 / NCIMB 13906 / BL2)).